Here is a 1197-residue protein sequence, read N- to C-terminus: MKFLPYIFLLCCGLWSTISFADEDYIEYRGISSNNRVTLDPLRLSNKELRWLASKKNLVIAVHKSQTATLLHTDSQQRVRGINADYLNLLKRALNIKLTLREYADHQKAMDALAEGEVDIVLSHLVTSPPLNNDIAATKPLIITFPALVTTLHDSMRPLTSPKPVNIARVANYPPDEVIHQSFPKATIISFTNLYQALASVSAGHNDYFIGSNIITSSMISRYFTHSLNVVKYYNSPRQYNFFLTRKESVILNEVLNRFVDALTNEVRYEVSQNWLDTGNLAFLNKPLELTEHEKQWIKQHPNLKVLENPYSPPYSMTDENGSVRGVMGDILNIITLQTGLNFSPITVSHNIHAGTQLSPGGWDIIPGAIYSEDRENNVLFAEAFITTPYVFVMQKAPDSEQTLKKGMKVAIPYYYELHSQLKEMYPEVEWIQVDNASAAFHKVKEGELDALVATQLNSRYMIDHYYPNELYHFLIPGVPNASLSFAFPRGEPELKDIINKALNAIPPSEVLRLTEKWIKMPNVTIDTWDLYSEQFYIVTTLSVLLVGSSLLWGFYLLRSVRRRKVIQGDLENQISFRKALSDSLPNPTYVVNWQGNVISHNSAFEHYFTADYYKNAMLPLENSDSPFKDVFSNAHEVTAETKENRTIYTQVFEIDNGIEKRCINHWHTLCNLPASDNAVYICGWQDITETRDLINALEVEKNKAIKATVAKSQFLATMSHEIRTPISSIMGFLELLSGSGLSKEQRVEAISLAYATGQSLLGLIGEILDVDKIESGNYQLQPQWVDIPTLVQNTCHSFGAIAASKSIALSCSSTFPEHYLVKIDPQAFKQVLSNLLSNALKFTTEGAVKITTSLGHIDDNHAVIKMTIMDSGSGLSQEEQQQLFKRYSQTSAGRQQTGSGLGLMICKELIKNMQGDLSLESHPGIGTTFTITIPVEISQQVATVEAKAEQPITLPEKLSILIADDHPTNRLLLKRQLNLLGYDVDEATDGVQALHKVSMQHYDLLITDVNMPNMDGFELTRKLREQNSSLPIWGLTANAQANEREKGLSCGMNLCLFKPLTLDVLKTHLSQLHQVAHIAPQYRHLDIEALKNNTANDLQLMQEILMTFQHETHKDLPAAFQALEAGDNRTFHQCIHRIHGAANILNLQKLINISHQLEITPVSDDSKPEILQLLNSVKEHIAELDQEIAVFCQKND.

Positions 1–21 (MKFLPYIFLLCCGLWSTISFA) are cleaved as a signal peptide. At 22-325 (DEDYIEYRGI…SMTDENGSVR (304 aa)) the chain is on the cytoplasmic side. A helical membrane pass occupies residues 326 to 346 (GVMGDILNIITLQTGLNFSPI). The Periplasmic segment spans residues 347 to 537 (TVSHNIHAGT…TWDLYSEQFY (191 aa)). A helical transmembrane segment spans residues 538–558 (IVTTLSVLLVGSSLLWGFYLL). Residues 559-1197 (RSVRRRKVIQ…EIAVFCQKND (639 aa)) lie on the Cytoplasmic side of the membrane. The 221-residue stretch at 718 to 938 (TMSHEIRTPI…TFTITIPVEI (221 aa)) folds into the Histidine kinase domain. Position 721 is a phosphohistidine; by autocatalysis (His-721). The region spanning 960 to 1074 (SILIADDHPT…VLKTHLSQLH (115 aa)) is the Response regulatory domain. A 4-aspartylphosphate modification is found at Asp-1009. The HPt domain occupies 1098-1197 (DLQLMQEILM…EIAVFCQKND (100 aa)). Phosphohistidine is present on His-1137.

In terms of processing, activation requires a sequential transfer of a phosphate group from a His in the primary transmitter domain, to an Asp in the receiver domain and to a His in the secondary transmitter domain.

The protein localises to the cell inner membrane. It carries out the reaction ATP + protein L-histidine = ADP + protein N-phospho-L-histidine.. Functionally, member of the two-component regulatory system EvgS/EvgA. Phosphorylates EvgA via a four-step phosphorelay in response to environmental signals. The sequence is that of Sensor protein EvgS (evgS) from Escherichia coli (strain K12).